We begin with the raw amino-acid sequence, 257 residues long: UPF0246 protein ACICU_02469 (257 aa).

The protein belongs to the UPF0246 family.

The protein is UPF0246 protein ACICU_02469 of Acinetobacter baumannii (strain ACICU).